The primary structure comprises 783 residues: Type 4 coupling protein DotL (783 aa).

The helical transmembrane segment at 47–67 (VSYYFSEAATFLLIMGGIFFL) threads the bilayer. The ATPase domain stretch occupies residues 100–500 (NIARGITFFG…ICMKLEDPTE (401 aa)). The tract at residues 671–773 (VEGALTIFSK…SAKISAEREK (103 aa)) is interaction with IcmS/IcmW.

In terms of assembly, the T4BSS is a complex nanomachine composed of several subcomplexes. This subunit is part of the Type IV Coupling Complex (T4CC), a subcomplex composed of the DotLMNYZ core and the IcmSW-LvgA adapter subunits, linked by the C-terminal tail of DotL. Six DotLMNYZ hetero-pentameric units may assemble into a hexameric nanomachine, forming an inner membrane channel for effectors to pass through. Interacts directly with DotM. Interacts directly, via its C-terminal region, with the type IV adapter proteins IcmS and IcmW. Also interacts with DotN and LvgA via its C-terminal region.

The protein resides in the cell inner membrane. Functionally, component of the Dot/Icm type IVB secretion system (T4BSS), which is used to inject bacterial effector proteins into eukaryotic host cells. Part of a subcomplex which recruits effector proteins and delivers them to the core transmembrane subcomplex. Plays a central role in the assembly of the subcomplex. Required for the recruitment of IcmS and IcmW to the inner membrane and for the translocation of adapter-dependent substrates. May have ATPase activity. The polypeptide is Type 4 coupling protein DotL (Legionella pneumophila subsp. pneumophila (strain Philadelphia 1 / ATCC 33152 / DSM 7513)).